The primary structure comprises 241 residues: RAD9, HUS1, RAD1-interacting nuclear orphan protein 1 (241 aa).

Residues methionine 1 to alanine 10 show a composition bias toward basic residues. A disordered region spans residues methionine 1–lysine 27. Residues serine 56 to phenylalanine 62 carry the RAD1-binding motif motif. 2 disordered regions span residues serine 68–proline 134 and isoleucine 157–aspartate 204. The span at glycine 72–arginine 87 shows a compositional bias: basic residues. The segment covering glutamate 100 to threonine 110 has biased composition (polar residues). Positions glycine 129–leucine 136 match the D-box motif. The KEN box motif lies at leucine 177–serine 181. Polar residues predominate over residues serine 181–lysine 193.

In terms of assembly, interacts (when phosphorylated by PLK1) with POLQ; promoting POLQ recruitment to DNA damage sites. Interacts with RAD1; interaction is direct and promotes association with the 9-1-1 (RAD9-RAD1-HUS1) complex. Interacts with RAD18. Interacts with TOPBP1. Interacts with UBE2N. In terms of processing, phosphorylated by PLK1, promoting interaction with polymerase theta (POLQ). Ubiquitinated and degraded by the APC/C complex upon mitotic exit.

It is found in the nucleus. It localises to the chromosome. Functionally, involved in microhomology-mediated end-joining (MMEJ) DNA repair by promoting recruitment of polymerase theta (POLQ) to DNA damage sites during mitosis. MMEJ is an alternative non-homologous end-joining (NHEJ) machinery that takes place during mitosis to repair double-strand breaks in DNA that originate in S-phase. Accumulates in M-phase; following phosphorylation by PLK1, interacts with POLQ, enabling its recruitment to double-strand breaks for subsequent repair. Also involved in the DNA damage response (DDR) signaling in response to genotoxic stresses such as ionizing radiation (IR) during the S phase. Recruited to sites of DNA damage through interaction with the 9-1-1 cell-cycle checkpoint response complex and TOPBP1 in a ATR-dependent manner. Required for the progression of the G1 to S phase transition. Plays a role in the stimulation of CHEK1 phosphorylation. This Bos taurus (Bovine) protein is RAD9, HUS1, RAD1-interacting nuclear orphan protein 1 (RHNO1).